A 97-amino-acid chain; its full sequence is Gibberellin-regulated protein 5 (97 aa).

Residues 1–27 (MANCIRRNALFFLTLLFLLSVSNLVQA) form the signal peptide.

Belongs to the GASA family. Post-translationally, six disulfide bonds may be present. As to expression, expressed in roots, root hairs, vasculature of cotyledons and hypocotyls, shoot apex, leaf veins, stems, flower receptacles, pollen, filaments, anthers and siliques.

Its subcellular location is the secreted. It is found in the cell wall. The protein localises to the extracellular space. It localises to the extracellular matrix. Its function is as follows. Gibberellin-regulated protein that acts as a negative regulator of gibberellin-induced flowering and stem growth. May inhibit flowering and inflorescence growth via a pathway involving GAI and by enhancing FLC expression and repressing FT and LFY. Acts as a negative regulator in thermotolerance by resogulating both salicylic acid (SA) signaling and heat shock-protein accumulation. This chain is Gibberellin-regulated protein 5 (GASA5), found in Arabidopsis thaliana (Mouse-ear cress).